The following is a 539-amino-acid chain: 2-isopropylmalate synthase (539 aa).

In terms of domain architecture, Pyruvate carboxyltransferase spans 8–269; sequence VLIFDTTLRD…YFNPFFGRPP (262 aa). The Mn(2+) site is built by Asp-17, His-208, His-210, and Asn-244. The tract at residues 408–539 is regulatory domain; that stretch reads QLKLVQVSCG…DLAKVDKKGI (132 aa).

It belongs to the alpha-IPM synthase/homocitrate synthase family. LeuA type 1 subfamily. In terms of assembly, homodimer. Requires Mn(2+) as cofactor.

Its subcellular location is the cytoplasm. It carries out the reaction 3-methyl-2-oxobutanoate + acetyl-CoA + H2O = (2S)-2-isopropylmalate + CoA + H(+). The protein operates within amino-acid biosynthesis; L-leucine biosynthesis; L-leucine from 3-methyl-2-oxobutanoate: step 1/4. In terms of biological role, catalyzes the condensation of the acetyl group of acetyl-CoA with 3-methyl-2-oxobutanoate (2-ketoisovalerate) to form 3-carboxy-3-hydroxy-4-methylpentanoate (2-isopropylmalate). The protein is 2-isopropylmalate synthase of Prochlorococcus marinus (strain NATL1A).